A 360-amino-acid polypeptide reads, in one-letter code: Protein Wnt-2 (360 aa).

Residues 1-25 (MNSPLRGIWLWLPLLLTWLTPEVSS) form the signal peptide. Disulfide bonds link Cys76–Cys87, Cys127–Cys135, Cys137–Cys157, Cys206–Cys220, Cys208–Cys215, Cys278–Cys309, Cys294–Cys304, Cys308–Cys348, Cys324–Cys339, Cys326–Cys336, and Cys331–Cys332. Residue Ser212 is the site of O-palmitoleoyl serine; by PORCN attachment. An N-linked (GlcNAc...) asparagine glycan is attached at Asn295.

The protein belongs to the Wnt family. Post-translationally, palmitoleoylation is required for efficient binding to frizzled receptors. Depalmitoleoylation leads to Wnt signaling pathway inhibition.

The protein localises to the secreted. Its subcellular location is the extracellular space. It is found in the extracellular matrix. In terms of biological role, ligand for members of the frizzled family of seven transmembrane receptors. Probable developmental protein. May be a signaling molecule which affects the development of discrete regions of tissues. Is likely to signal over only few cell diameters. In Ateles geoffroyi (Black-handed spider monkey), this protein is Protein Wnt-2 (WNT2).